The sequence spans 103 residues: Co-chaperonin GroES (103 aa).

It belongs to the GroES chaperonin family. In terms of assembly, heptamer of 7 subunits arranged in a ring. Interacts with the chaperonin GroEL.

Its subcellular location is the cytoplasm. Together with the chaperonin GroEL, plays an essential role in assisting protein folding. The GroEL-GroES system forms a nano-cage that allows encapsulation of the non-native substrate proteins and provides a physical environment optimized to promote and accelerate protein folding. GroES binds to the apical surface of the GroEL ring, thereby capping the opening of the GroEL channel. The chain is Co-chaperonin GroES from Synechococcus sp. (strain CC9605).